Consider the following 534-residue polypeptide: UDP-glucuronosyltransferase 1A4 (534 aa).

The N-terminal stretch at 1–28 is a signal peptide; that stretch reads MARGLQVPLPRLATGLLLLLSVQPWAES. Residues N119, N142, N296, and N348 are each glycosylated (N-linked (GlcNAc...) asparagine). The helical transmembrane segment at 492–508 threads the bilayer; that stretch reads VIGFLLAVVLTVAFITF.

The protein belongs to the UDP-glycosyltransferase family. As to quaternary structure, homodimer. Homooligomer. Interacts with UGT1A1, UGT1A3, UGT1A6, UGT1A7, UGT1A8, UGT1A9 and UGT1A10 to form heterodimers. Isoform 1 interacts with isoform 2/i2 suggesting that oligomerization is involved in negative regulation of transferase activity by isoform 2. Isoform 1 also interacts with respective i2 isoforms of UGT1A1, UGT1A3, UGT1A6, UGT1A7, UGT1A8, UGT1A9 and UGT1A10. In terms of tissue distribution, expressed in liver. Expressed in kidney, colon and small intestine. Not expressed in esophagus. Not expressed in skin. As to expression, expressed in liver, kidney, colon, esophagus and small intestine.

The protein localises to the endoplasmic reticulum membrane. The enzyme catalyses glucuronate acceptor + UDP-alpha-D-glucuronate = acceptor beta-D-glucuronoside + UDP + H(+). It carries out the reaction calcidiol + UDP-alpha-D-glucuronate = calcidiol 25-O-(beta-D-glucuronide) + UDP + H(+). The catalysed reaction is calcidiol + UDP-alpha-D-glucuronate = calcidiol 3-O-(beta-D-glucuronide) + UDP + H(+). It catalyses the reaction calcitriol + UDP-alpha-D-glucuronate = calcitriol 25-O-(beta-D-glucuronide) + UDP + H(+). The enzyme catalyses (5Z,8Z,11Z,14Z)-eicosatetraenoate + UDP-alpha-D-glucuronate = O-[(5Z),(8Z),(11Z),(14Z)-eicosatetraenoyl]-beta-D-glucuronate + UDP. It carries out the reaction 15-hydroxy-(5Z,8Z,11Z,13E)-eicosatetraenoate + UDP-alpha-D-glucuronate = 15-O-(beta-D-glucuronosyl)-(5Z,8Z,11Z,14Z)-eicosatetraenoate + UDP + H(+). The catalysed reaction is 20-hydroxy-(5Z,8Z,11Z,14Z)-eicosatetraenoate + UDP-alpha-D-glucuronate = 20-O-(beta-D-glucuronosyl)-(5Z,8Z,11Z,14Z)-eicosatetraenoate + UDP + H(+). Its function is as follows. UDP-glucuronosyltransferase (UGT) that catalyzes phase II biotransformation reactions in which lipophilic substrates are conjugated with glucuronic acid to increase the metabolite's water solubility, thereby facilitating excretion into either the urine or bile. Essential for the elimination and detoxification of drugs, xenobiotics and endogenous compounds. Involved in the glucuronidation of calcidiol, which is the major circulating form of vitamin D3 essential for the regulation of calcium and phosphate homeostasis. Also glucuronidates the biologically active form of vitamin D3, calcitriol, probably leading to its biliary transport and intestinal reabsorption. Involved in the glucuronidation of arachidonic acid (AA) and AA-derived eicosanoids including 15-HETE, 20-HETE and PGB1. Lacks UDP-glucuronosyltransferase (UGT) activity but acts as a negative regulator of isoform 1. The sequence is that of UDP-glucuronosyltransferase 1A4 from Homo sapiens (Human).